A 119-amino-acid polypeptide reads, in one-letter code: Large ribosomal subunit protein uL18 (119 aa).

The protein belongs to the universal ribosomal protein uL18 family. As to quaternary structure, part of the 50S ribosomal subunit; part of the 5S rRNA/L5/L18/L25 subcomplex. Contacts the 5S and 23S rRNAs.

In terms of biological role, this is one of the proteins that bind and probably mediate the attachment of the 5S RNA into the large ribosomal subunit, where it forms part of the central protuberance. This is Large ribosomal subunit protein uL18 from Paracoccus denitrificans (strain Pd 1222).